We begin with the raw amino-acid sequence, 102 residues long: Aspartyl/glutamyl-tRNA(Asn/Gln) amidotransferase subunit C (102 aa).

Belongs to the GatC family. Heterotrimer of A, B and C subunits.

It carries out the reaction L-glutamyl-tRNA(Gln) + L-glutamine + ATP + H2O = L-glutaminyl-tRNA(Gln) + L-glutamate + ADP + phosphate + H(+). The catalysed reaction is L-aspartyl-tRNA(Asn) + L-glutamine + ATP + H2O = L-asparaginyl-tRNA(Asn) + L-glutamate + ADP + phosphate + 2 H(+). In terms of biological role, allows the formation of correctly charged Asn-tRNA(Asn) or Gln-tRNA(Gln) through the transamidation of misacylated Asp-tRNA(Asn) or Glu-tRNA(Gln) in organisms which lack either or both of asparaginyl-tRNA or glutaminyl-tRNA synthetases. The reaction takes place in the presence of glutamine and ATP through an activated phospho-Asp-tRNA(Asn) or phospho-Glu-tRNA(Gln). This is Aspartyl/glutamyl-tRNA(Asn/Gln) amidotransferase subunit C from Bordetella avium (strain 197N).